The sequence spans 240 residues: Glutamine transport ATP-binding protein GlnQ (240 aa).

The ABC transporter domain occupies 2 to 236 (IEFKNVSKHF…PPSQRLQEFL (235 aa)). 34 to 41 (GPSGSGKS) contributes to the ATP binding site.

The protein belongs to the ABC transporter superfamily. Heterotetramer with 2 subunits of GlnQ and 2 subunits of GlnP.

It is found in the cell inner membrane. In terms of biological role, part of the binding-protein-dependent transport system for glutamine. Probably responsible for energy coupling to the transport system. The protein is Glutamine transport ATP-binding protein GlnQ (glnQ) of Escherichia coli (strain K12).